Here is a 538-residue protein sequence, read N- to C-terminus: Bifunctional purine biosynthesis protein PurH (538 aa).

An MGS-like domain is found at 11–158; that stretch reads PDLHRVRRAL…KNHAYTGVVT (148 aa).

This sequence belongs to the PurH family.

It carries out the reaction (6R)-10-formyltetrahydrofolate + 5-amino-1-(5-phospho-beta-D-ribosyl)imidazole-4-carboxamide = 5-formamido-1-(5-phospho-D-ribosyl)imidazole-4-carboxamide + (6S)-5,6,7,8-tetrahydrofolate. It catalyses the reaction IMP + H2O = 5-formamido-1-(5-phospho-D-ribosyl)imidazole-4-carboxamide. The protein operates within purine metabolism; IMP biosynthesis via de novo pathway; 5-formamido-1-(5-phospho-D-ribosyl)imidazole-4-carboxamide from 5-amino-1-(5-phospho-D-ribosyl)imidazole-4-carboxamide (10-formyl THF route): step 1/1. Its pathway is purine metabolism; IMP biosynthesis via de novo pathway; IMP from 5-formamido-1-(5-phospho-D-ribosyl)imidazole-4-carboxamide: step 1/1. In Bartonella bacilliformis (strain ATCC 35685 / KC583 / Herrer 020/F12,63), this protein is Bifunctional purine biosynthesis protein PurH.